The sequence spans 266 residues: Amylovoran biosynthesis glycosyltransferase AmsE (266 aa).

The protein belongs to the glycosyltransferase 2 family.

It participates in glycan metabolism; exopolysaccharide biosynthesis. Involved in the biosynthesis of amylovoran which functions as a virulence factor. This is Amylovoran biosynthesis glycosyltransferase AmsE (amsE) from Erwinia amylovora (Fire blight bacteria).